We begin with the raw amino-acid sequence, 382 residues long: Glutaminyl-peptide cyclotransferase-like protein (382 aa).

A helical transmembrane segment spans residues 35–55; sequence LLPLLLALAVGSAFYTIWSGW. Residues Cys-167 and Cys-191 are joined by a disulfide bond. Asp-186 lines the Zn(2+) pocket. Glu-225 serves as the catalytic Proton acceptor. Residue Glu-226 coordinates Zn(2+). Residue Asp-269 is the Proton acceptor of the active site. His-351 serves as a coordination point for Zn(2+).

It belongs to the glutaminyl-peptide cyclotransferase family.

The protein resides in the golgi apparatus membrane. It catalyses the reaction N-terminal L-glutaminyl-[peptide] = N-terminal 5-oxo-L-prolyl-[peptide] + NH4(+). Functionally, responsible for the biosynthesis of pyroglutamyl peptides. This is Glutaminyl-peptide cyclotransferase-like protein (QPCTL) from Homo sapiens (Human).